The following is a 107-amino-acid chain: Flagellar hook-basal body complex protein FliE (107 aa).

It belongs to the FliE family.

The protein resides in the bacterial flagellum basal body. This Sodalis glossinidius (strain morsitans) protein is Flagellar hook-basal body complex protein FliE.